The following is a 556-amino-acid chain: Phenylalanine--tRNA ligase beta subunit (556 aa).

The region spanning 274-349 is the B5 domain; it reads HEPEEMEVDL…ITLGLNKIGY (76 aa). Mg(2+) is bound by residues Asp327, Asp333, Glu336, and Glu337.

It belongs to the phenylalanyl-tRNA synthetase beta subunit family. Type 2 subfamily. As to quaternary structure, tetramer of two alpha and two beta subunits. Requires Mg(2+) as cofactor.

The protein localises to the cytoplasm. The enzyme catalyses tRNA(Phe) + L-phenylalanine + ATP = L-phenylalanyl-tRNA(Phe) + AMP + diphosphate + H(+). This chain is Phenylalanine--tRNA ligase beta subunit, found in Korarchaeum cryptofilum (strain OPF8).